The sequence spans 798 residues: Serine/threonine-protein kinase SIK2 (798 aa).

In terms of domain architecture, Protein kinase spans 26-277; the sequence is YDIERTLGKG…ISQIKQHKWM (252 aa). ATP contacts are provided by residues 32-40 and lysine 55; that span reads LGKGNFAVV. Aspartate 148 serves as the catalytic Proton acceptor. Position 181 is a phosphothreonine (threonine 181). Residue serine 185 is modified to Phosphoserine. Residues 302–342 enclose the UBA domain; the sequence is DYNEQVLGIMQTLGIDRQRTVESLQNSSYNHFAAIYYLLLE. Residues 351–361 are compositionally biased toward polar residues; sequence QLSSRPATGRQ. Residues 351-382 form a disordered region; sequence QLSSRPATGRQQRPRSSEISNAEMPQDSLTSE. At serine 575 the chain carries Phosphoserine. The tract at residues 672–691 is disordered; the sequence is ACPQTSQTSATNGLPPSDSA. Residues 673–685 are compositionally biased toward polar residues; it reads CPQTSQTSATNGL.

The protein belongs to the protein kinase superfamily. CAMK Ser/Thr protein kinase family. SNF1 subfamily. It depends on Mg(2+) as a cofactor. Post-translationally, phosphorylated at Thr-181 by STK11/LKB1 in complex with STE20-related adapter-alpha (STRADA) pseudo kinase and CAB39. In terms of tissue distribution, ubiquitously expressed in embryonic tissue.

The protein resides in the cytoplasm. It catalyses the reaction L-seryl-[protein] + ATP = O-phospho-L-seryl-[protein] + ADP + H(+). The enzyme catalyses L-threonyl-[protein] + ATP = O-phospho-L-threonyl-[protein] + ADP + H(+). With respect to regulation, activated by phosphorylation on Thr-181. Functionally, phosphorylates IRS1 in insulin-stimulated adipocytes, potentially modulating the efficiency of insulin signal transduction. Inhibits CREB activity by phosphorylating and repressing the CREB-specific coactivators, CRTC1-3. This is Serine/threonine-protein kinase SIK2 (SIK2) from Gallus gallus (Chicken).